A 527-amino-acid polypeptide reads, in one-letter code: Coiled-coil domain-containing protein 148 (527 aa).

Coiled coils occupy residues 289–353 (LAKD…TEIK) and 401–438 (LEKRLMERKKLALQEVQEEEERERRLEALRKQVAVAVQ).

The polypeptide is Coiled-coil domain-containing protein 148 (Ccdc148) (Mus musculus (Mouse)).